The chain runs to 146 residues: Large ribosomal subunit protein uL15 (146 aa).

Residues 1–13 show a composition bias toward basic and acidic residues; it reads MKLHELHSAEGSR. Positions 1-55 are disordered; sequence MKLHELHSAEGSRRNRKRVGRGTSSGYGKTSGRGQKGQLARQGGHTRLGFEGGQM. The segment covering 23–35 has biased composition (gly residues); it reads TSSGYGKTSGRGQ.

This sequence belongs to the universal ribosomal protein uL15 family. In terms of assembly, part of the 50S ribosomal subunit.

Binds to the 23S rRNA. The chain is Large ribosomal subunit protein uL15 from Lactobacillus acidophilus (strain ATCC 700396 / NCK56 / N2 / NCFM).